A 396-amino-acid chain; its full sequence is Elongation factor Tu (396 aa).

In terms of domain architecture, tr-type G spans 10-206 (KPHCNIGTIG…NVDEYIPQPE (197 aa)). The G1 stretch occupies residues 19–26 (GHVDHGKT). Residue 19 to 26 (GHVDHGKT) coordinates GTP. Mg(2+) is bound at residue Thr26. The tract at residues 60-64 (GITIS) is G2. The interval 81–84 (DCPG) is G3. GTP-binding positions include 81–85 (DCPGH) and 136–139 (NKCD). The interval 136-139 (NKCD) is G4. The tract at residues 174–176 (SAL) is G5.

The protein belongs to the TRAFAC class translation factor GTPase superfamily. Classic translation factor GTPase family. EF-Tu/EF-1A subfamily. As to quaternary structure, monomer.

Its subcellular location is the cytoplasm. It catalyses the reaction GTP + H2O = GDP + phosphate + H(+). GTP hydrolase that promotes the GTP-dependent binding of aminoacyl-tRNA to the A-site of ribosomes during protein biosynthesis. This is Elongation factor Tu from Afipia carboxidovorans (strain ATCC 49405 / DSM 1227 / KCTC 32145 / OM5) (Oligotropha carboxidovorans).